Consider the following 113-residue polypeptide: U11-theraphotoxin-Hhn1a (113 aa).

The first 21 residues, 1–21 (MDTVRVAFLLVLVLAVSLGQA), serve as a signal peptide directing secretion. Positions 22–74 (DKDENRMEMQEKTEQGKSYLDFAENLLLQKLEELEAKLLEEDSEESRNSRQKR) are excised as a propeptide. A compositionally biased stretch (basic and acidic residues) spans 60–69 (LEEDSEESRN). Residues 60–83 (LEEDSEESRNSRQKRCIGEGVPCD) form a disordered region. 3 cysteine pairs are disulfide-bonded: C75–C90, C82–C95, and C89–C110.

Belongs to the neurotoxin 14 (magi-1) family. 01 (HNTX-16) subfamily. As to expression, expressed by the venom gland.

The protein localises to the secreted. In terms of biological role, probable ion channel inhibitor. The chain is U11-theraphotoxin-Hhn1a from Cyriopagopus hainanus (Chinese bird spider).